We begin with the raw amino-acid sequence, 162 residues long: UPF0114 protein PFLU_5318 (162 aa).

3 helical membrane-spanning segments follow: residues 15 to 35 (LLAP…LKFF), 53 to 73 (LILV…LVMV), and 136 to 156 (LMWY…MGYL).

Belongs to the UPF0114 family.

The protein localises to the cell membrane. In Pseudomonas fluorescens (strain SBW25), this protein is UPF0114 protein PFLU_5318.